A 356-amino-acid polypeptide reads, in one-letter code: Phosphate acyltransferase (356 aa).

Belongs to the PlsX family. As to quaternary structure, homodimer. Probably interacts with PlsY.

The protein resides in the cytoplasm. The enzyme catalyses a fatty acyl-[ACP] + phosphate = an acyl phosphate + holo-[ACP]. It functions in the pathway lipid metabolism; phospholipid metabolism. Its function is as follows. Catalyzes the reversible formation of acyl-phosphate (acyl-PO(4)) from acyl-[acyl-carrier-protein] (acyl-ACP). This enzyme utilizes acyl-ACP as fatty acyl donor, but not acyl-CoA. In Xanthobacter autotrophicus (strain ATCC BAA-1158 / Py2), this protein is Phosphate acyltransferase.